A 1415-amino-acid polypeptide reads, in one-letter code: DNA-directed RNA polymerase subunit beta' (1415 aa).

Residues cysteine 72, cysteine 74, cysteine 87, and cysteine 90 each coordinate Zn(2+). Mg(2+) contacts are provided by aspartate 463, aspartate 465, and aspartate 467. Cysteine 812, cysteine 886, cysteine 893, and cysteine 896 together coordinate Zn(2+).

The protein belongs to the RNA polymerase beta' chain family. In terms of assembly, the RNAP catalytic core consists of 2 alpha, 1 beta, 1 beta' and 1 omega subunit. When a sigma factor is associated with the core the holoenzyme is formed, which can initiate transcription. Requires Mg(2+) as cofactor. Zn(2+) is required as a cofactor.

It catalyses the reaction RNA(n) + a ribonucleoside 5'-triphosphate = RNA(n+1) + diphosphate. DNA-dependent RNA polymerase catalyzes the transcription of DNA into RNA using the four ribonucleoside triphosphates as substrates. This Dinoroseobacter shibae (strain DSM 16493 / NCIMB 14021 / DFL 12) protein is DNA-directed RNA polymerase subunit beta'.